We begin with the raw amino-acid sequence, 363 residues long: Peptide chain release factor 1 (363 aa).

Position 237 is an N5-methylglutamine (Gln237). The tract at residues 281-302 (QQAEDEKSHAEEQTIRRSLVAS) is disordered. Residues 282-295 (QAEDEKSHAEEQTI) are compositionally biased toward basic and acidic residues.

The protein belongs to the prokaryotic/mitochondrial release factor family. Post-translationally, methylated by PrmC. Methylation increases the termination efficiency of RF1.

It is found in the cytoplasm. Functionally, peptide chain release factor 1 directs the termination of translation in response to the peptide chain termination codons UAG and UAA. The protein is Peptide chain release factor 1 of Psychromonas ingrahamii (strain DSM 17664 / CCUG 51855 / 37).